A 274-amino-acid chain; its full sequence is 2,3,4,5-tetrahydropyridine-2,6-dicarboxylate N-succinyltransferase (274 aa).

Positions 104 and 141 each coordinate substrate.

It belongs to the transferase hexapeptide repeat family. Homotrimer.

The protein localises to the cytoplasm. It carries out the reaction (S)-2,3,4,5-tetrahydrodipicolinate + succinyl-CoA + H2O = (S)-2-succinylamino-6-oxoheptanedioate + CoA. The protein operates within amino-acid biosynthesis; L-lysine biosynthesis via DAP pathway; LL-2,6-diaminopimelate from (S)-tetrahydrodipicolinate (succinylase route): step 1/3. This Shewanella halifaxensis (strain HAW-EB4) protein is 2,3,4,5-tetrahydropyridine-2,6-dicarboxylate N-succinyltransferase.